The following is a 405-amino-acid chain: uncharacterized protein (405 aa).

10 helical membrane passes run 9–29 (VFAL…VTIV), 41–61 (VFLA…ASFC), 74–94 (VLAG…YSVT), 98–118 (QAFF…GAFF), 138–158 (ANGV…GLGG), 168–190 (LVVG…LHVN), 227–247 (ALAG…AVLH), 252–272 (WWGM…VIAI), 291–311 (LVMS…LCAL), and 373–393 (IAFI…LAQP).

This sequence belongs to the major facilitator superfamily. Drug:H(+) antiporter-3 (DHA3) (TC 2.A.1.21) family.

The protein resides in the cell membrane. This is an uncharacterized protein from Bacillus subtilis (strain 168).